The primary structure comprises 276 residues: Undecaprenyl-diphosphatase 1 (276 aa).

The next 7 membrane-spanning stretches (helical) occupy residues Ile4–Val24, Lys45–Glu62, Phe83–Lys103, Val108–Trp128, Val187–Glu207, Val217–Cys237, and Val252–Trp272.

This sequence belongs to the UppP family.

The protein resides in the cell inner membrane. The catalysed reaction is di-trans,octa-cis-undecaprenyl diphosphate + H2O = di-trans,octa-cis-undecaprenyl phosphate + phosphate + H(+). In terms of biological role, catalyzes the dephosphorylation of undecaprenyl diphosphate (UPP). Confers resistance to bacitracin. This is Undecaprenyl-diphosphatase 1 from Burkholderia ambifaria (strain ATCC BAA-244 / DSM 16087 / CCUG 44356 / LMG 19182 / AMMD) (Burkholderia cepacia (strain AMMD)).